Consider the following 91-residue polypeptide: Large ribosomal subunit protein bL27 (91 aa).

Belongs to the bacterial ribosomal protein bL27 family.

The chain is Large ribosomal subunit protein bL27 from Deinococcus deserti (strain DSM 17065 / CIP 109153 / LMG 22923 / VCD115).